We begin with the raw amino-acid sequence, 511 residues long: 2,3-bisphosphoglycerate-independent phosphoglycerate mutase (511 aa).

D12 provides a ligand contact to Mn(2+). At Y36 the chain carries Phosphotyrosine. S62 contributes to the Mn(2+) binding site. Catalysis depends on S62, which acts as the Phosphoserine intermediate. Substrate is bound by residues H123, 153–154 (RD), R185, R191, 261–264 (RPDR), and K336. Residues D403, H407, D444, H445, and H462 each coordinate Mn(2+).

The protein belongs to the BPG-independent phosphoglycerate mutase family. In terms of assembly, monomer. Requires Mn(2+) as cofactor.

It catalyses the reaction (2R)-2-phosphoglycerate = (2R)-3-phosphoglycerate. Its pathway is carbohydrate degradation; glycolysis; pyruvate from D-glyceraldehyde 3-phosphate: step 3/5. Essential for rapid growth and for sporulation. Catalyzes the interconversion of 2-phosphoglycerate and 3-phosphoglycerate. This chain is 2,3-bisphosphoglycerate-independent phosphoglycerate mutase, found in Bacillus velezensis (strain DSM 23117 / BGSC 10A6 / LMG 26770 / FZB42) (Bacillus amyloliquefaciens subsp. plantarum).